The sequence spans 85 residues: Large ribosomal subunit protein bL27 (85 aa).

It belongs to the bacterial ribosomal protein bL27 family.

This Pseudomonas fluorescens (strain ATCC BAA-477 / NRRL B-23932 / Pf-5) protein is Large ribosomal subunit protein bL27.